The sequence spans 193 residues: V-type sodium ATPase subunit E (193 aa).

It belongs to the V-ATPase E subunit family. The N-terminus is blocked.

Its function is as follows. Involved in ATP-driven sodium extrusion. The protein is V-type sodium ATPase subunit E (ntpE) of Enterococcus hirae (strain ATCC 9790 / DSM 20160 / JCM 8729 / LMG 6399 / NBRC 3181 / NCIMB 6459 / NCDO 1258 / NCTC 12367 / WDCM 00089 / R).